A 349-amino-acid chain; its full sequence is Aminomethyltransferase (349 aa).

This sequence belongs to the GcvT family. In terms of assembly, the glycine cleavage system is composed of four proteins: P, T, L and H.

It carries out the reaction N(6)-[(R)-S(8)-aminomethyldihydrolipoyl]-L-lysyl-[protein] + (6S)-5,6,7,8-tetrahydrofolate = N(6)-[(R)-dihydrolipoyl]-L-lysyl-[protein] + (6R)-5,10-methylene-5,6,7,8-tetrahydrofolate + NH4(+). The glycine cleavage system catalyzes the degradation of glycine. The sequence is that of Aminomethyltransferase from Thermus thermophilus (strain ATCC 27634 / DSM 579 / HB8).